The primary structure comprises 415 residues: MASNVDKFSSRFYLNVNKEELKKEYVGKTIQQVPTPGFVIDEAIFEKNCNRMLDRASDIGVTFRAHVKTHKTIEGTLLQLGDGRTKAVVVSTLMEGFSLIPLILEGKIDDLLYGLPVAKSRLPELYELSKIVPHLRLMIDNPKQLDILREFTSTLPDDAKPWSIFVKIDMGTHRAGVTNDSQVVKDLISTILSDKSLFDLFGFYCHAGHSYASRSIDAASEFLCAEIDAANTAAKFATSIDPSLKLTLSVGATPTAHSVSPKVKELLPTLSGKLEVHAGNYPMNDVQQMITKCISQADVADYVFAEVISNYPGRNGEPGEVLVNAGVIAMSRETSPEGDFGIVITPGFESFYVDRLSQEHGILKSKDPKATLPDASQVLCIIPNHSCITAAAFPWYYITKGSDVITDIWVPWKGW.

At K68 the chain carries N6-(pyridoxal phosphate)lysine. Pyridoxal 5'-phosphate-binding residues include Y204, Y211, T253, G279, and N280. 2 residues coordinate Zn(2+): H385 and C387.

Belongs to the DSD1 family. In terms of assembly, homodimer. Requires pyridoxal 5'-phosphate as cofactor. Zn(2+) is required as a cofactor.

The protein resides in the cytoplasm. It localises to the nucleus. The enzyme catalyses D-serine = pyruvate + NH4(+). Functionally, catalyzes the conversion of D-serine to pyruvate and ammonia. May play a role in D-serine detoxification. The protein is D-serine dehydratase of Schizosaccharomyces pombe (strain 972 / ATCC 24843) (Fission yeast).